The primary structure comprises 446 residues: Na(+)/H(+) antiporter NhaA (446 aa).

Helical transmembrane passes span 23–43, 73–93, 109–129, 138–158, 167–187, 193–213, 219–239, 314–334, 348–368, 381–401, and 419–439; these read GGMLLMGVVLLAMFLANSPWG, LMTFINDALMAVFFFSVGLEI, LLPIVAACGGMLVPVLIYYFM, GLAIPMATDIAFSLGVLSLFG, VFLTAFAVVDDIGGILVIALF, SVNYLIASAGILLILCGGNFF, WFYIFWGVIMWYLFLQSGIHA, MVNYIILPLFAFANAGVSLTA, VLAGLLAGKFAGIYFFTWLVI, WVNLTGICLLGGIGFTVSLFI, and GVILGTVLAGVLAYLVLQFAL.

Belongs to the NhaA Na(+)/H(+) (TC 2.A.33) antiporter family.

The protein resides in the cell inner membrane. It catalyses the reaction Na(+)(in) + 2 H(+)(out) = Na(+)(out) + 2 H(+)(in). Functionally, na(+)/H(+) antiporter that extrudes sodium in exchange for external protons. This chain is Na(+)/H(+) antiporter NhaA, found in Phocaeicola vulgatus (strain ATCC 8482 / DSM 1447 / JCM 5826 / CCUG 4940 / NBRC 14291 / NCTC 11154) (Bacteroides vulgatus).